A 252-amino-acid chain; its full sequence is Hydroxyacylglutathione hydrolase (252 aa).

Positions 52, 54, 56, 57, 107, 128, and 166 each coordinate Zn(2+).

Belongs to the metallo-beta-lactamase superfamily. Glyoxalase II family. As to quaternary structure, monomer. The cofactor is Zn(2+).

The enzyme catalyses an S-(2-hydroxyacyl)glutathione + H2O = a 2-hydroxy carboxylate + glutathione + H(+). The protein operates within secondary metabolite metabolism; methylglyoxal degradation; (R)-lactate from methylglyoxal: step 2/2. Its function is as follows. Thiolesterase that catalyzes the hydrolysis of S-D-lactoyl-glutathione to form glutathione and D-lactic acid. This Neisseria meningitidis serogroup C / serotype 2a (strain ATCC 700532 / DSM 15464 / FAM18) protein is Hydroxyacylglutathione hydrolase.